The following is a 96-amino-acid chain: Large ribosomal subunit protein uL4 (96 aa).

The interval 77-96 (RAPNKKVKRRELKKNPLKNL) is disordered. Basic residues predominate over residues 79 to 96 (PNKKVKRRELKKNPLKNL).

The protein belongs to the universal ribosomal protein uL4 family. As to quaternary structure, component of the large ribosomal subunit.

Its subcellular location is the cytoplasm. Component of the large ribosomal subunit. The ribosome is a large ribonucleoprotein complex responsible for the synthesis of proteins in the cell. The protein is Large ribosomal subunit protein uL4 (rpl4) of Xenopus tropicalis (Western clawed frog).